The sequence spans 485 residues: Adenosylhomocysteinase 2 (485 aa).

Substrate contacts are provided by T64, D139, and E205. Position 206 to 208 (206 to 208 (TTT)) interacts with NAD(+). Residues K235 and D239 each coordinate substrate. NAD(+)-binding positions include N240, 269-274 (GYGDVG), E292, N327, 348-350 (IGH), and N397.

Belongs to the adenosylhomocysteinase family. Requires NAD(+) as cofactor.

The enzyme catalyses S-adenosyl-L-homocysteine + H2O = L-homocysteine + adenosine. The protein operates within amino-acid biosynthesis; L-homocysteine biosynthesis; L-homocysteine from S-adenosyl-L-homocysteine: step 1/1. In terms of biological role, adenosylhomocysteine is a competitive inhibitor of S-adenosyl-L-methionine-dependent methyl transferase reactions; therefore adenosylhomocysteinase may play a key role in the control of methylations via regulation of the intracellular concentration of adenosylhomocysteine. The protein is Adenosylhomocysteinase 2 (SAHH2) of Arabidopsis thaliana (Mouse-ear cress).